A 141-amino-acid chain; its full sequence is Hemoglobin subunit alpha (141 aa).

One can recognise a Globin domain in the interval 1–141 (VLSAKDKTNI…VSTVLTSKYR (141 aa)). S3 is modified (phosphoserine). K7 carries the N6-succinyllysine modification. The residue at position 8 (T8) is a Phosphothreonine. K16 bears the N6-acetyllysine; alternate mark. N6-succinyllysine; alternate is present on K16. Position 24 is a phosphotyrosine (Y24). N6-succinyllysine is present on K40. S49 is subject to Phosphoserine. Residue H58 participates in O2 binding. Residue H87 participates in heme b binding. At S102 the chain carries Phosphoserine. Residue T108 is modified to Phosphothreonine. Residues S124 and S131 each carry the phosphoserine modification. Phosphothreonine occurs at positions 134 and 137. A Phosphoserine modification is found at S138.

The protein belongs to the globin family. In terms of assembly, heterotetramer of two alpha chains and two beta chains. As to expression, red blood cells.

Its function is as follows. Involved in oxygen transport from the lung to the various peripheral tissues. Hemopressin acts as an antagonist peptide of the cannabinoid receptor CNR1. Hemopressin-binding efficiently blocks cannabinoid receptor CNR1 and subsequent signaling. In Mesocricetus auratus (Golden hamster), this protein is Hemoglobin subunit alpha (HBA).